The following is a 310-amino-acid chain: 4-hydroxyproline epimerase (310 aa).

Catalysis depends on C88, which acts as the Proton acceptor. Substrate contacts are provided by residues 89-90 (GH), H208, and D232. Residue C236 is the Proton donor of the active site. 237-238 (GT) is a binding site for substrate.

It belongs to the proline racemase family. In terms of assembly, homodimer.

The catalysed reaction is trans-4-hydroxy-L-proline = cis-4-hydroxy-D-proline. With respect to regulation, inhibited by iodoacetate, iodoacetamide and by high amounts (10 mM) of pyrrole-2-carboxylic acid (PYC). Not inhibited by PYC at 1 mM. Its function is as follows. Allows intracellular utilization of 4-hydroxyproline, one of the major constituents of host collagen, by converting 4-hydroxy-L-proline to 4-hydroxy-D-proline, which can be further metabolized by intracellular 4-hydroxy-D-proline oxidases. The sequence is that of 4-hydroxyproline epimerase from Burkholderia pseudomallei (strain K96243).